Consider the following 61-residue polypeptide: Sodium/potassium-transporting ATPase subunit gamma (61 aa).

A helical transmembrane segment spans residues 24-44 (KGGLIFAAIAFVVGMLIIFSG).

Belongs to the FXYD family. In terms of assembly, regulatory subunit of the sodium/potassium-transporting ATPase which is composed of a catalytic alpha subunit, an auxiliary non-catalytic beta subunit and an additional regulatory subunit.

It localises to the membrane. Its function is as follows. May be involved in forming the receptor site for cardiac glycoside binding or may modulate the transport function of the sodium ATPase. The sequence is that of Sodium/potassium-transporting ATPase subunit gamma (fxyd2) from Xenopus laevis (African clawed frog).